A 170-amino-acid polypeptide reads, in one-letter code: Flavin reductase (NADPH) (170 aa).

Belongs to the non-flavoprotein flavin reductase family.

It carries out the reaction reduced riboflavin + NADP(+) = riboflavin + NADPH + 2 H(+). Its function is as follows. Catalyzes the NADH-dependent reduction of FAD to provide FADH2 for the halogenase RebH. The chain is Flavin reductase (NADPH) (rbmH) from Lentzea aerocolonigenes (Lechevalieria aerocolonigenes).